We begin with the raw amino-acid sequence, 632 residues long: MGKAIGIDLGTTNSVVAVVVGGEPVVIPNQEGQRTTPSVVAFTDKGERLVGQVAKRQAITNPENTIFSIKRLMGRKYNSQEVQEAKKRLPYKIVEAPNGDAHVEIMGKRYSPPEISAMILQKLKQAAEDYLGEPVTEAVITVPAYFDDSQRQATKDAGRIAGLNVLRIINEPTAAALAYGLDKKKEEKIAVYDLGGGTFDISILEIGEGVIEVKATNGDTYLGGDDFDIRVMDWLIEEFKKQEGIDLRKDRMALQRLKEAAERAKIELSSAMETEINLPFITADASGPKHLLMKLTRAKLEQLVDDLIQKSLEPCKKALSDAGLSQSQIDEVILVGGQTRTPKVQKVVQDFFGKEPHKGVNPDEVVAVGAAIQAAILKGEVKEVLLLDVTPLSLGIETLGGVFTKIIERNTTIPTKKSQIFTTAADNQTAVTIKVYQGEREMAADNKLLGVFELVGIPPAPRGIPQIEVTFDIDANGILHVSAKDLATGKEQSIRITASSGLSEEEIKKMIREAEAHAEEDRRKKQIAEARNEADNMIYTVEKTLRDMGDRISEDERKRIEEAIEKCRRIKDTSNDVNEIKAAVEELAKASHRVAEELYKKAGASQQGAGSTTQSKKEEDVIEAEVEDKDNK.

Phosphothreonine; by autocatalysis is present on Thr198. The segment at 599–632 (YKKAGASQQGAGSTTQSKKEEDVIEAEVEDKDNK) is disordered. Positions 604–614 (ASQQGAGSTTQ) are enriched in polar residues. Over residues 620–632 (DVIEAEVEDKDNK) the composition is skewed to acidic residues.

Belongs to the heat shock protein 70 family.

Its function is as follows. Acts as a chaperone. The sequence is that of Chaperone protein DnaK from Thermodesulfovibrio yellowstonii (strain ATCC 51303 / DSM 11347 / YP87).